The sequence spans 244 residues: uncharacterized protein (244 aa).

Belongs to the MtxX family.

This is an uncharacterized protein from Methanocaldococcus jannaschii (strain ATCC 43067 / DSM 2661 / JAL-1 / JCM 10045 / NBRC 100440) (Methanococcus jannaschii).